A 347-amino-acid chain; its full sequence is Violet-sensitive opsin (347 aa).

At 1–31 the chain is on the extracellular side; it reads MLEEEDFYLFKNVSNVSPFDGPQYHIAPKWA. Asn12 is a glycosylation site (N-linked (GlcNAc...) asparagine). The helical transmembrane segment at 32–56 threads the bilayer; that stretch reads FTLQAIFMGMVFLIGTPLNFIVLLV. The Cytoplasmic segment spans residues 57–68; sequence TIKYKKLRQPLN. A helical membrane pass occupies residues 69–94; sequence YILVNITVGGFLMCIFSIFPVFVSSS. At 95-108 the chain is on the extracellular side; sequence QGYFFFGRIACSID. Cys105 and Cys182 are joined by a disulfide. A helical transmembrane segment spans residues 109–128; it reads AFVGTLTGLVTGWSLAFLAF. The Cytoplasmic portion of the chain corresponds to 129 to 147; it reads ERYIVICKPMGNFNFSSSH. A helical membrane pass occupies residues 148 to 171; it reads ALAVVICTWIIGIVVSVPPFLGWS. Topologically, residues 172-197 are extracellular; the sequence is RYMPEGLQCSCGPDWYTVGTKYRSEY. A helical membrane pass occupies residues 198–225; sequence YTWFIFIFCFVIPLSLICFSYGRLLGAL. The Cytoplasmic portion of the chain corresponds to 226-247; sequence RAVAAQQQESASTQKAEREVSR. Residues 248 to 271 traverse the membrane as a helical segment; it reads MVIFMVGSFCLCYVPYAAMAMYMV. Residues 272–279 are Extracellular-facing; that stretch reads TNRNHGLD. Residues 280–304 form a helical membrane-spanning segment; sequence LRLVTIPAFFSKSSCVYNPIIYSFM. Residue Lys291 is modified to N6-(retinylidene)lysine. Residues 305 to 347 lie on the Cytoplasmic side of the membrane; that stretch reads NKQFRGCIMETVCGRPMSDDSSVSSTSQRTEVSTVSSSQVSPA. Residues 323 to 347 form a disordered region; the sequence is DDSSVSSTSQRTEVSTVSSSQVSPA.

Belongs to the G-protein coupled receptor 1 family. Opsin subfamily. In terms of processing, phosphorylated on some or all of the serine and threonine residues present in the C-terminal region. In terms of tissue distribution, the color pigments are found in the cone photoreceptor cells.

It is found in the membrane. Functionally, visual pigments are the light-absorbing molecules that mediate vision. They consist of an apoprotein, opsin, covalently linked to cis-retinal. This Xenopus laevis (African clawed frog) protein is Violet-sensitive opsin.